Reading from the N-terminus, the 306-residue chain is uncharacterized protein (306 aa).

Transmembrane regions (helical) follow at residues 7-27, 30-50, 68-88, 95-115, 144-164, 194-214, 232-252, and 274-294; these read LESWFFIAPALLLAVLSGYLA, VGIINIAINGGMVFGGLFMAL, LFITIPLSVLFSSVIGCLFAL, ADHVIVGTGINLLASGITLFI, AIGVFVFSLLLIGFVWYLMSF, IGAICSMMVAGLSGSLFVLSV, IAIMIISMWRIIPSIFIGLIF, and TIPFIISLLVMLLFGFLNVAP.

The protein resides in the cell membrane. This is an uncharacterized protein from Mycoplasma genitalium (strain ATCC 33530 / DSM 19775 / NCTC 10195 / G37) (Mycoplasmoides genitalium).